We begin with the raw amino-acid sequence, 173 residues long: UPF0102 protein Psyc_1908 (173 aa).

The protein belongs to the UPF0102 family.

This Psychrobacter arcticus (strain DSM 17307 / VKM B-2377 / 273-4) protein is UPF0102 protein Psyc_1908.